We begin with the raw amino-acid sequence, 321 residues long: Phospho-N-acetylmuramoyl-pentapeptide-transferase (321 aa).

10 helical membrane-spanning segments follow: residues 4 to 24 (MVWAFIVASAVGLLIGPWLIP), 51 to 71 (TMGGLLFLIAVPMAVLVTVGF), 75 to 95 (SGVLLLGLLGFGLIGFLDDYI), 109 to 129 (QKFTGQLILSLILIYGVVYGI), 139 to 159 (GFEVWWDAGALYYPLALLLIV), 173 to 193 (GLAAGMTFWVALAFAAIASAG), 195 to 215 (SDVTAAFAAALAGGCIGFLFF), 222 to 242 (MFMGDTGSLALGGAVATLALL), 247 to 267 (LILPVLGAVFVAETLSVILQV), and 297 to 317 (VVYTFWAASLISAFLGVLLAM).

Belongs to the glycosyltransferase 4 family. MraY subfamily. Mg(2+) serves as cofactor.

It is found in the cell membrane. It catalyses the reaction UDP-N-acetyl-alpha-D-muramoyl-L-alanyl-gamma-D-glutamyl-meso-2,6-diaminopimeloyl-D-alanyl-D-alanine + di-trans,octa-cis-undecaprenyl phosphate = di-trans,octa-cis-undecaprenyl diphospho-N-acetyl-alpha-D-muramoyl-L-alanyl-D-glutamyl-meso-2,6-diaminopimeloyl-D-alanyl-D-alanine + UMP. The protein operates within cell wall biogenesis; peptidoglycan biosynthesis. Functionally, catalyzes the initial step of the lipid cycle reactions in the biosynthesis of the cell wall peptidoglycan: transfers peptidoglycan precursor phospho-MurNAc-pentapeptide from UDP-MurNAc-pentapeptide onto the lipid carrier undecaprenyl phosphate, yielding undecaprenyl-pyrophosphoryl-MurNAc-pentapeptide, known as lipid I. The chain is Phospho-N-acetylmuramoyl-pentapeptide-transferase from Heliobacterium modesticaldum (strain ATCC 51547 / Ice1).